A 252-amino-acid polypeptide reads, in one-letter code: Probable transcriptional regulatory protein Moth_1704 (252 aa).

This sequence belongs to the TACO1 family.

It is found in the cytoplasm. The protein is Probable transcriptional regulatory protein Moth_1704 of Moorella thermoacetica (strain ATCC 39073 / JCM 9320).